A 147-amino-acid polypeptide reads, in one-letter code: UPF0306 protein YhbP (147 aa).

This sequence belongs to the UPF0306 family.

This is UPF0306 protein YhbP from Salmonella agona (strain SL483).